Here is an 858-residue protein sequence, read N- to C-terminus: Taste receptor type 1 member 3 (858 aa).

The first 20 residues, 1–20 (MPALAIMGLSLAAFLELGMG), serve as a signal peptide directing secretion. Topologically, residues 21–572 (ASLCLSQQFK…RPKFLAWGEP (552 aa)) are extracellular. N-linked (GlcNAc...) asparagine; when associated with variant T-60 glycosylation occurs at Asn-58. N-linked (GlcNAc...) asparagine glycosylation is found at Asn-85, Asn-130, Asn-203, Asn-264, Asn-379, Asn-387, Asn-418, Asn-439, and Asn-482. The chain crosses the membrane as a helical span at residues 573-593 (VVLSLLLLLCLVLGLALAALG). At 594–610 (LSVHHWDSPLVQASGGS) the chain is on the cytoplasmic side. The helical transmembrane segment at 611–631 (QFCFGLICLGLFCLSVLLFPG) threads the bilayer. The Extracellular segment spans residues 632–644 (RPSSASCLAQQPM). Residues 645 to 665 (AHLPLTGCLSTLFLQAAETFV) traverse the membrane as a helical segment. Over 666–687 (ESELPLSWANWLCSYLRGLWAW) the chain is Cytoplasmic. A helical transmembrane segment spans residues 688 to 708 (LVVLLATFVEAALCAWYLIAF). The Extracellular portion of the chain corresponds to 709–735 (PPEVVTDWSVLPTEVLEHCHVRSWVSL). A helical membrane pass occupies residues 736–756 (GLVHITNAMLAFLCFLGTFLV). At 757-767 (QSQPGRYNRAR) the chain is on the cytoplasmic side. The helical transmembrane segment at 768–788 (GLTFAMLAYFITWVSFVPLLA) threads the bilayer. The Extracellular segment spans residues 789 to 796 (NVQVAYQP). A helical membrane pass occupies residues 797–817 (AVQMGAILVCALGILVTFHLP). The Cytoplasmic segment spans residues 818 to 858 (KCYVLLWLPKLNTQEFFLGRNAKKAADENSGGGEAAQGHNE).

The protein belongs to the G-protein coupled receptor 3 family. TAS1R subfamily. Forms homodimers or heterodimers with TAS1R1 and TAS1R2. In terms of processing, the Thr-60 variant is predicted to introduce a novel N-linked glycosylation site at Asn-58. The addition of even a short carbohydrate group at Asn-58 is predicted to disrupt one of the contact surfaces required for stability of a dimer. Therefore a Thr-60 variant N-glycosylated at Asn-58 is predicted to be precluded from forming homodimers or heterodimers. In terms of tissue distribution, expressed in circumvallate, foliate and fungiform taste papillae as well as in taste buds on the palate. Also expressed in testis. Not expressed in brain, heart, kidney, liver or spleen. The topographic distribution in various taste papillae is different from those of other T1R members.

It is found in the cell membrane. Putative taste receptor. TAS1R1/TAS1R3 responds to the umami taste stimulus (the taste of monosodium glutamate) and also to most of the 20 standard L-amino acids, but not to their D-enantiomers or other compounds. TAS1R2/TAS1R3 recognizes diverse natural and synthetic sweeteners. TAS1R3 is essential for the recognition and response to the disaccharide trehalose. Sequence differences within and between species can significantly influence the selectivity and specificity of taste responses. This is Taste receptor type 1 member 3 (Tas1r3) from Mus musculus (Mouse).